The following is a 361-amino-acid chain: Phenylalanine 4-monooxygenase, chloroplastic (361 aa).

A chloroplast-targeting transit peptide spans 1–55 (MLALRQGALLLSARGGQTTHDNLQLCAGPSRRPRARWISSAPRPSTLVERHIRPQ). The tract at residues 47 to 67 (LVERHIRPQASTASDATTSTS) is disordered. Positions 56-67 (ASTASDATTSTS) are enriched in low complexity. Positions 227, 232, and 272 each coordinate Fe cation.

It belongs to the biopterin-dependent aromatic amino acid hydroxylase family. The cofactor is Fe(2+).

The protein resides in the plastid. It localises to the chloroplast. It carries out the reaction (6R)-L-erythro-5,6,7,8-tetrahydrobiopterin + L-phenylalanine + O2 = (4aS,6R)-4a-hydroxy-L-erythro-5,6,7,8-tetrahydrobiopterin + L-tyrosine. Catalyzes the hydroxylation of L-phenylalanine to L-tyrosine. Can functionally complement an Escherichia coli tyrosine auxotroph. This Chlamydomonas reinhardtii (Chlamydomonas smithii) protein is Phenylalanine 4-monooxygenase, chloroplastic.